We begin with the raw amino-acid sequence, 532 residues long: uncharacterized protein (532 aa).

14 helical membrane-spanning segments follow: residues I25–G45, S65–T85, A109–A129, L134–S154, K179–L199, I203–E223, L248–E268, V302–T322, K344–S364, S371–I391, A392–G412, A425–R445, S459–G479, and A494–V514.

This sequence belongs to the polysaccharide synthase family.

The protein localises to the cell membrane. This is an uncharacterized protein from Bacillus subtilis (strain 168).